The chain runs to 278 residues: UPF0758 protein BURPS668_0979 (278 aa).

Residues 1–64 (MQYEIVSAGE…ATAAARRGRD (64 aa)) are disordered. The segment covering 22 to 59 (AAAPAAPSSAVPSSAALSSAALSSAARPTGAPPATAAA) has biased composition (low complexity). An MPN domain is found at 156–278 (LVDSPGAVDD…TFSFAQAGWI (123 aa)). His-227, His-229, and Asp-240 together coordinate Zn(2+). The JAMM motif signature appears at 227 to 240 (HNHPSGAVRPSAAD).

Belongs to the UPF0758 family.

This Burkholderia pseudomallei (strain 668) protein is UPF0758 protein BURPS668_0979.